Reading from the N-terminus, the 451-residue chain is Tubulin beta-1 chain (451 aa).

The MREI motif motif lies at 1–4 (MREI). GTP contacts are provided by Q11, E69, S138, G142, T143, and G144. E69 is a Mg(2+) binding site. S172 carries the post-translational modification Phosphoserine; by CDK1. GTP contacts are provided by N204 and N226. Residues 432–451 (LEEDEEVTEEAEMEPEDKGH) form a disordered region. Residues 433 to 451 (EEDEEVTEEAEMEPEDKGH) are compositionally biased toward acidic residues. A 5-glutamyl polyglutamate modification is found at E440.

The protein belongs to the tubulin family. Dimer of alpha and beta chains. A typical microtubule is a hollow water-filled tube with an outer diameter of 25 nm and an inner diameter of 15 nM. Alpha-beta heterodimers associate head-to-tail to form protofilaments running lengthwise along the microtubule wall with the beta-tubulin subunit facing the microtubule plus end conferring a structural polarity. Microtubules usually have 13 protofilaments but different protofilament numbers can be found in some organisms and specialized cells. Interacts with RANBP10. Mg(2+) is required as a cofactor. Some glutamate residues at the C-terminus are polyglutamylated, resulting in polyglutamate chains on the gamma-carboxyl group. Polyglutamylation plays a key role in microtubule severing by spastin (SPAST). SPAST preferentially recognizes and acts on microtubules decorated with short polyglutamate tails: severing activity by SPAST increases as the number of glutamates per tubulin rises from one to eight, but decreases beyond this glutamylation threshold. Glutamylation is also involved in cilia motility. Post-translationally, some glutamate residues at the C-terminus are monoglycylated but not polyglycylated due to the absence of functional TTLL10 in human. Monoglycylation is mainly limited to tubulin incorporated into cilia and flagella axonemes, which is required for their stability and maintenance. Flagella glycylation controls sperm motility. Both polyglutamylation and monoglycylation can coexist on the same protein on adjacent residues, and lowering glycylation levels increases polyglutamylation, and reciprocally. In terms of processing, phosphorylated on Ser-172 by CDK1 during the cell cycle, from metaphase to telophase, but not in interphase. This phosphorylation inhibits tubulin incorporation into microtubules. As to expression, hematopoietic cell-specific. Major isotype in leukocytes, where it represents 50% of all beta-tubulins.

The protein resides in the cytoplasm. Its subcellular location is the cytoskeleton. Tubulin is the major constituent of microtubules, a cylinder consisting of laterally associated linear protofilaments composed of alpha- and beta-tubulin heterodimers. Microtubules grow by the addition of GTP-tubulin dimers to the microtubule end, where a stabilizing cap forms. Below the cap, tubulin dimers are in GDP-bound state, owing to GTPase activity of alpha-tubulin. The protein is Tubulin beta-1 chain (TUBB1) of Homo sapiens (Human).